The primary structure comprises 78 residues: Large ribosomal subunit protein bL28 (78 aa).

Belongs to the bacterial ribosomal protein bL28 family.

The polypeptide is Large ribosomal subunit protein bL28 (Synechococcus sp. (strain CC9605)).